A 65-amino-acid polypeptide reads, in one-letter code: Large ribosomal subunit protein bL35 (65 aa).

Disordered stretches follow at residues 1-23 (MPKI…GKVK) and 29-48 (GSHI…RQSH). Residues 33 to 43 (LAKKSRKRKRD) show a composition bias toward basic residues.

Belongs to the bacterial ribosomal protein bL35 family.

This chain is Large ribosomal subunit protein bL35, found in Desulfatibacillum aliphaticivorans.